Here is a 534-residue protein sequence, read N- to C-terminus: Arginine--tRNA ligase (534 aa).

Residues 120–130 carry the 'HIGH' region motif; sequence ANPTGFLHLGH.

It belongs to the class-I aminoacyl-tRNA synthetase family. Monomer.

Its subcellular location is the cytoplasm. It carries out the reaction tRNA(Arg) + L-arginine + ATP = L-arginyl-tRNA(Arg) + AMP + diphosphate. The protein is Arginine--tRNA ligase of Mesomycoplasma hyopneumoniae (strain 232) (Mycoplasma hyopneumoniae).